The sequence spans 368 residues: Aminomethyltransferase (368 aa).

Belongs to the GcvT family. The glycine cleavage system is composed of four proteins: P, T, L and H.

The enzyme catalyses N(6)-[(R)-S(8)-aminomethyldihydrolipoyl]-L-lysyl-[protein] + (6S)-5,6,7,8-tetrahydrofolate = N(6)-[(R)-dihydrolipoyl]-L-lysyl-[protein] + (6R)-5,10-methylene-5,6,7,8-tetrahydrofolate + NH4(+). Its function is as follows. The glycine cleavage system catalyzes the degradation of glycine. This Xylella fastidiosa (strain 9a5c) protein is Aminomethyltransferase.